A 211-amino-acid polypeptide reads, in one-letter code: Probable nicotinate-nucleotide adenylyltransferase (211 aa).

It belongs to the NadD family.

It carries out the reaction nicotinate beta-D-ribonucleotide + ATP + H(+) = deamido-NAD(+) + diphosphate. It participates in cofactor biosynthesis; NAD(+) biosynthesis; deamido-NAD(+) from nicotinate D-ribonucleotide: step 1/1. In terms of biological role, catalyzes the reversible adenylation of nicotinate mononucleotide (NaMN) to nicotinic acid adenine dinucleotide (NaAD). The sequence is that of Probable nicotinate-nucleotide adenylyltransferase from Wigglesworthia glossinidia brevipalpis.